The primary structure comprises 273 residues: Homeobox protein HMX2 (273 aa).

The tract at residues 1-152 (MGSKEDAGKG…RQAGAAKKKT (152 aa)) is disordered. Over residues 93–102 (KGSGGSGPGG) the composition is skewed to gly residues. Basic and acidic residues predominate over residues 114–123 (SDFKEEKERL). Residues 149–208 (KKKTRTVFSRSQVYQLESTFDMKRYLSSSERACLASSLQLTETQVKTWFQNRRNKWKRQL) constitute a DNA-binding region (homeobox).

It belongs to the HMX homeobox family.

The protein resides in the nucleus. Functionally, transcription factor involved in specification of neuronal cell types and which is required for inner ear and hypothalamus development. The protein is Homeobox protein HMX2 (HMX2) of Homo sapiens (Human).